The following is a 788-amino-acid chain: Protein translocase subunit SecA 2 (788 aa).

Residues Q86, 104–108 (GEGKT), and D493 each bind ATP.

It belongs to the SecA family. Monomer and homodimer. Part of the essential Sec protein translocation apparatus which comprises SecA, SecYEG and auxiliary proteins SecDF. Other proteins may also be involved.

It localises to the cell membrane. Its subcellular location is the cytoplasm. The enzyme catalyses ATP + H2O + cellular proteinSide 1 = ADP + phosphate + cellular proteinSide 2.. Its function is as follows. Part of the Sec protein translocase complex. Interacts with the SecYEG preprotein conducting channel. Has a central role in coupling the hydrolysis of ATP to the transfer of proteins into and across the cell membrane, serving as an ATP-driven molecular motor driving the stepwise translocation of polypeptide chains across the membrane. The polypeptide is Protein translocase subunit SecA 2 (Bacillus cereus (strain ZK / E33L)).